We begin with the raw amino-acid sequence, 432 residues long: Adenylosuccinate synthetase (432 aa).

Residues 13-19 (GDEGKGK) and 41-43 (GHT) each bind GTP. The active-site Proton acceptor is the Asp-14. Positions 14 and 41 each coordinate Mg(2+). Residues 14-17 (DEGK), 39-42 (NAGH), Thr-130, Arg-144, Gln-225, Thr-240, and Arg-304 each bind IMP. The active-site Proton donor is His-42. Residue 300–306 (AVTGRPR) coordinates substrate. Residues Arg-306, 332–334 (KLD), and 415–417 (STG) each bind GTP.

It belongs to the adenylosuccinate synthetase family. Homodimer. It depends on Mg(2+) as a cofactor.

The protein localises to the cytoplasm. The enzyme catalyses IMP + L-aspartate + GTP = N(6)-(1,2-dicarboxyethyl)-AMP + GDP + phosphate + 2 H(+). It functions in the pathway purine metabolism; AMP biosynthesis via de novo pathway; AMP from IMP: step 1/2. Plays an important role in the de novo pathway of purine nucleotide biosynthesis. Catalyzes the first committed step in the biosynthesis of AMP from IMP. This chain is Adenylosuccinate synthetase, found in Histophilus somni (strain 2336) (Haemophilus somnus).